Here is a 658-residue protein sequence, read N- to C-terminus: Integrator complex subunit 9 (658 aa).

Residues K2 and F19 each contribute to the 1D-myo-inositol hexakisphosphate site. A Glycyl lysine isopeptide (Lys-Gly) (interchain with G-Cter in SUMO2) cross-link involves residue K58. K510 and R511 together coordinate 1D-myo-inositol hexakisphosphate. The interval 548 to 574 (DNKHLLQPPPRPAQPTSGKKRKRVSDD) is disordered. Residues 566–570 (KKRKR) carry the Nuclear localization signal motif.

It belongs to the metallo-beta-lactamase superfamily. RNA-metabolizing metallo-beta-lactamase-like family. INTS9 subfamily. As to quaternary structure, component of the Integrator complex, composed of core subunits INTS1, INTS2, INTS3, INTS4, INTS5, INTS6, INTS7, INTS8, INTS9/RC74, INTS10, INTS11/CPSF3L, INTS12, INTS13, INTS14 and INTS15. The core complex associates with protein phosphatase 2A subunits PPP2CA and PPP2R1A, to form the Integrator-PP2A (INTAC) complex. INTS9 is part of the RNA endonuclease subcomplex, composed of INTS4, INTS9, INTS11 and inositol hexakisphosphate (InsP6). Interacts with WDR73; interaction is required for the assembly of the RNA endonuclease subcomplex in the cytoplasm. Interacts with BRAT1; interaction is required for the assembly of the RNA endonuclease subcomplex. Interacts with ESRRB, ESRRB is not a core component of the Integrator complex and this association is a bridge for the interaction with the multiprotein complex Integrator; attracts the transcriptional machinery.

The protein resides in the nucleus. It localises to the cytoplasm. Functionally, component of the integrator complex, a multiprotein complex that terminates RNA polymerase II (Pol II) transcription in the promoter-proximal region of genes. The integrator complex provides a quality checkpoint during transcription elongation by driving premature transcription termination of transcripts that are unfavorably configured for transcriptional elongation: the complex terminates transcription by (1) catalyzing dephosphorylation of the C-terminal domain (CTD) of Pol II subunit POLR2A/RPB1 and SUPT5H/SPT5, (2) degrading the exiting nascent RNA transcript via endonuclease activity and (3) promoting the release of Pol II from bound DNA. The integrator complex is also involved in terminating the synthesis of non-coding Pol II transcripts, such as enhancer RNAs (eRNAs), small nuclear RNAs (snRNAs), telomerase RNAs and long non-coding RNAs (lncRNAs). Mediates recruitment of cytoplasmic dynein to the nuclear envelope, probably as component of the integrator complex. The polypeptide is Integrator complex subunit 9 (Homo sapiens (Human)).